A 167-amino-acid polypeptide reads, in one-letter code: Phospholipase A2 imperatoxin-1 (167 aa).

The Ca(2+) site is built by Trp38, Gly40, and Gly42. Intrachain disulfides connect Cys39-Cys61, Cys60-Cys99, Cys67-Cys92, Cys90-Cys127, and Cys132-Cys144. His64 is a catalytic residue. Asp65 is a binding site for Ca(2+). A glycan (N-linked (GlcNAc...) asparagine) is linked at Asn102. Residues 136–140 constitute a propeptide that is removed on maturation; sequence RRLAR.

Belongs to the phospholipase A2 family. Group III subfamily. Heterodimer composed of a large subunit and a small subunit; disulfide-linked. The cofactor is Ca(2+). As to expression, expressed by the venom gland.

The protein localises to the secreted. It carries out the reaction a 1,2-diacyl-sn-glycero-3-phosphocholine + H2O = a 1-acyl-sn-glycero-3-phosphocholine + a fatty acid + H(+). Its function is as follows. Phospholipase toxin, which may catalyze the calcium-dependent hydrolysis of the 2-acyl groups in 3-sn-phosphoglycerides. Inhibits both skeletal (RYR1) and cardiac (RYR2) ryanodine receptors (calcium release channels). Probably blocks ryanodine receptors by generating a lipid product. This is Phospholipase A2 imperatoxin-1 from Pandinus imperator (Emperor scorpion).